Here is a 344-residue protein sequence, read N- to C-terminus: Meiotic recombination protein DMC1 homolog (344 aa).

Positions 1-22 are disordered; it reads MMASLKAEETSQMQLVEREEND. 133 to 140 lines the ATP pocket; sequence GEFRSGKT. R235 is a dsDNA binding site. SsDNA-binding residues include R235, F238, R241, R247, and R315. Residues R241 and R247 each coordinate dsDNA.

Belongs to the RecA family. DMC1 subfamily. Double stacked ring-shaped homooctamer. Interacts with BRCA2A and BRCA2B. In terms of tissue distribution, expressed in mitotic and/or meiotic tissues. Expressed in roots, leaves and anthers and carpels of young fower buds.

It is found in the nucleus. In terms of biological role, may participate in meiotic recombination, specifically in homologous strand assimilation, which is required for the resolution of meiotic double-strand breaks. Mediates interhomolog recombination during meiosis. The sequence is that of Meiotic recombination protein DMC1 homolog from Arabidopsis thaliana (Mouse-ear cress).